The chain runs to 422 residues: Hispidin-3-hydroxylase (422 aa).

The chain crosses the membrane as a helical span at residues 6 to 26 (NSLSVLIVGAGLGGLAAAIAL). Positions 50, 108, and 318 each coordinate FAD.

Belongs to the paxM FAD-dependent monooxygenase family. As to quaternary structure, monomer. It depends on FAD as a cofactor.

It localises to the membrane. The enzyme catalyses hispidin + NADH + O2 + H(+) = 3-hydroxyhispidin + NAD(+) + H2O. The catalysed reaction is hispidin + NADPH + O2 + H(+) = 3-hydroxyhispidin + NADP(+) + H2O. It participates in secondary metabolite biosynthesis. In terms of biological role, hispidin-3-hydroxylase; part of the gene cluster that mediates the fungal bioluminescence cycle. Hydroxylates hispidin in order to produce the fungal luciferin 3-hydroxyhispidin. The fungal bioluminescence cycle begins with the hispidin synthetase that catalyzes the formation of hispidin which is further hydroxylated by the hispidin-3-hydroxylase, yielding the fungal luciferin 3-hydroxyhispidin. The luciferase then produces an endoperoxide as a high-energy intermediate with decomposition that yields oxyluciferin (also known as caffeoylpyruvate) and light emission. Oxyluciferin can be recycled to caffeic acid by caffeoylpyruvate hydrolase. The polypeptide is Hispidin-3-hydroxylase (Neonothopanus nambi (Agaricus nambi)).